The sequence spans 349 residues: Leukotriene B4 receptor 1 (349 aa).

Residues 1 to 19 (MNTTSPAAPSSSGVSFISL) are Extracellular-facing. The N-linked (GlcNAc...) asparagine glycan is linked to Asn-2. Residues 20–42 (LVIIVLSVALAVGLPGNSFVVWS) traverse the membrane as a helical segment. Residues 43-54 (ILAKLRKRSVTA) lie on the Cytoplasmic side of the membrane. The chain crosses the membrane as a helical span at residues 55 to 75 (LMVLHLALADLAVLLTAPFFL). Residues 76 to 91 (YSVAQGTWTFGLSSCR) are Extracellular-facing. The chain crosses the membrane as a helical span at residues 92-113 (LFHYVCGVSMYASVLLIMTMSL). At 114–138 (DRSLAVALPFVSQKLRTKAVAWRVL) the chain is on the cytoplasmic side. Residues 139–159 (AGIWVMSVLLATPVLLYRTVH) traverse the membrane as a helical segment. At 160-179 (LGLNNRSLTCFLKYPSERHR) the chain is on the extracellular side. Asn-164 is a glycosylation site (N-linked (GlcNAc...) asparagine). The helical transmembrane segment at 180–200 (AFHLFFEVITGFLLPFLVVVA) threads the bilayer. The Cytoplasmic segment spans residues 201–222 (SYCDIGRRLRARRFRRSRRTGR). A helical membrane pass occupies residues 223-243 (LVALIILAFAAFWLPYHVVNL). Over 244-269 (AEGFRAAAGKALGSGPVGRRLLLARH) the chain is Extracellular. Residues 270–290 (VLITLAFLSSSVNPLLYACAG) form a helical membrane-spanning segment. Residues 291–349 (GGLLRSAGVGFIAKLLEGTGSETSSSRRKGTLAQTLRGTPASPEPDPAESLTASTNPLE) lie on the Cytoplasmic side of the membrane. The disordered stretch occupies residues 311 to 349 (SETSSSRRKGTLAQTLRGTPASPEPDPAESLTASTNPLE).

Belongs to the G-protein coupled receptor 1 family. Post-translationally, phosphorylated by GRK6 upon leukotriene B4 binding; which promotes desensitization.

It is found in the cell membrane. Functionally, receptor for extracellular ATP &gt; UTP and ADP. The activity of this receptor is mediated by G proteins which activate a phosphatidylinositol-calcium second messenger system. May be the cardiac P2Y receptor involved in the regulation of cardiac muscle contraction through modulation of L-type calcium currents. Is a receptor for leukotriene B4, a potent chemoattractant involved in inflammation and immune response. In Bos taurus (Bovine), this protein is Leukotriene B4 receptor 1 (LTB4R).